A 346-amino-acid polypeptide reads, in one-letter code: c-di-GMP synthase (346 aa).

It belongs to the CD-NTase family.

The enzyme catalyses 2 GTP = 3',3'-c-di-GMP + 2 diphosphate. In terms of biological role, cyclic nucleotide synthase (second messenger synthase) of a CBASS antivirus system. CBASS (cyclic oligonucleotide-based antiphage signaling system) provides immunity against bacteriophage. The CD-NTase protein synthesizes cyclic nucleotides in response to infection; these serve as specific second messenger signals. The signals activate a diverse range of effectors, leading to bacterial cell death and thus abortive phage infection. A type I-D(GG) CBASS system. Its function is as follows. Cyclic dinucleotide synthase that catalyzes the synthesis of c-di-GMP, has no activity with other NTP substrates. The protein is c-di-GMP synthase of Lachnospiraceae bacterium (strain RUG226).